The following is a 569-amino-acid chain: Beta-galactoside-specific lectin 3 (569 aa).

The N-terminal stretch at 1-33 is a signal peptide; sequence MNAVMDSRGAWVSCFLILGLVFGATVKAETKFS. Glu198 is an active-site residue. 3 disulfides stabilise this stretch: Cys280–Cys311, Cys327–Cys346, and Cys370–Cys387. Residues 288 to 307 constitute a propeptide, connecting peptide; the sequence is EVRYWPLVIRPVLENSGAVD. Residues 314 to 441 form the Ricin B-type lectin 1 domain; sequence SEPTVRIVGR…YSLGQGWLAG (128 aa). Position 329–331 (329–331) interacts with D-galactose; the sequence is DVR. N-linked (GlcNAc...) asparagine glycosylation is found at Asn402 and Asn442. The Ricin B-type lectin 2 domain maps to 445-568; it reads APREVTIYGF…GNPNQMWLPV (124 aa). Disulfide bonds link Cys458/Cys471 and Cys497/Cys514. 541-543 provides a ligand contact to D-galactose; it reads DVA.

Belongs to the ribosome-inactivating protein family. Type 2 RIP subfamily. Disulfide-linked dimer of A and B chains.

It carries out the reaction Endohydrolysis of the N-glycosidic bond at one specific adenosine on the 28S rRNA.. The A chain is responsible for inhibiting protein synthesis through the catalytic inactivation of 60S ribosomal subunits by removing adenine from position 4,324 of 28S rRNA. The B chain binds to cell receptors and probably facilitates the entry into the cell of the A chain; B chains are also responsible for cell agglutination (lectin activity). Inhibits growth of the human tumor cell line Molt4. The polypeptide is Beta-galactoside-specific lectin 3 (Viscum album (European mistletoe)).